The chain runs to 127 residues: Aspartate 1-decarboxylase (127 aa).

Ser25 acts as the Schiff-base intermediate with substrate; via pyruvic acid in catalysis. Pyruvic acid (Ser) is present on Ser25. Thr57 serves as a coordination point for substrate. Residue Tyr58 is the Proton donor of the active site. 73 to 75 contributes to the substrate binding site; it reads GAA.

This sequence belongs to the PanD family. In terms of assembly, heterooctamer of four alpha and four beta subunits. It depends on pyruvate as a cofactor. Is synthesized initially as an inactive proenzyme, which is activated by self-cleavage at a specific serine bond to produce a beta-subunit with a hydroxyl group at its C-terminus and an alpha-subunit with a pyruvoyl group at its N-terminus.

The protein resides in the cytoplasm. It catalyses the reaction L-aspartate + H(+) = beta-alanine + CO2. It participates in cofactor biosynthesis; (R)-pantothenate biosynthesis; beta-alanine from L-aspartate: step 1/1. Its function is as follows. Catalyzes the pyruvoyl-dependent decarboxylation of aspartate to produce beta-alanine. This is Aspartate 1-decarboxylase from Bacillus cereus (strain G9842).